Consider the following 496-residue polypeptide: Cytochrome P450 71B12 (496 aa).

A helical transmembrane segment spans residues 2–22 (SLWYIIVAFVFFSSMIIVRII). Cys436 is a binding site for heme.

The protein belongs to the cytochrome P450 family. Heme serves as cofactor.

It localises to the membrane. This is Cytochrome P450 71B12 (CYP71B12) from Arabidopsis thaliana (Mouse-ear cress).